We begin with the raw amino-acid sequence, 356 residues long: Glutamine synthetase (356 aa).

The 81-residue stretch at I19–G99 folds into the GS beta-grasp domain. The GS catalytic domain maps to K106–P356.

Belongs to the glutamine synthetase family. Homooctamer.

Its subcellular location is the cytoplasm. It catalyses the reaction L-glutamate + NH4(+) + ATP = L-glutamine + ADP + phosphate + H(+). This chain is Glutamine synthetase, found in Hordeum vulgare (Barley).